The following is a 154-amino-acid chain: Cyanate hydratase (154 aa).

Residues arginine 100, glutamate 103, and serine 126 contribute to the active site.

The protein belongs to the cyanase family.

It catalyses the reaction cyanate + hydrogencarbonate + 3 H(+) = NH4(+) + 2 CO2. Its function is as follows. Catalyzes the reaction of cyanate with bicarbonate to produce ammonia and carbon dioxide. The protein is Cyanate hydratase of Aspergillus fumigatus (strain CBS 144.89 / FGSC A1163 / CEA10) (Neosartorya fumigata).